The chain runs to 438 residues: Putative permease HI_0125 (438 aa).

13 helical membrane passes run 21-41 (IIAG…VPNM), 51-71 (SVFI…GLWA), 73-93 (APMA…SLVI), 97-117 (VAIP…TLIS), 137-157 (AGIG…GLVV), 167-187 (LGDF…LIIG), 195-215 (GGIL…DPNV), 238-258 (FMGA…MTAV), 296-316 (LFSG…AAGT), 326-346 (AIVV…AFLV), 347-367 (PGYA…SNVS), 386-406 (FIVL…ALVI), and 418-438 (NVGT…GWAI). 315 to 322 (GTAAGGKT) lines the ATP pocket.

It belongs to the nucleobase:cation symporter-2 (NCS2) (TC 2.A.40) family. Azg-like subfamily.

The protein localises to the cell membrane. This chain is Putative permease HI_0125, found in Haemophilus influenzae (strain ATCC 51907 / DSM 11121 / KW20 / Rd).